Consider the following 160-residue polypeptide: Calcium-binding protein CP1 (160 aa).

EF-hand domains are found at residues 22-49, 52-87, and 93-128; these read AFEI…IPSG, NDET…TPFS, and GDDG…AGLA. Ca(2+)-binding residues include Asp27, Asp29, Asp31, Lys33, Asp38, Asp65, Asn67, Asp69, Glu76, Asp106, Asp108, Asp110, Arg112, and Asp117.

In terms of tissue distribution, expressed in roots and flowers.

It is found in the cytoplasm. The protein localises to the cytosol. Binds calcium in vitro. The chain is Calcium-binding protein CP1 from Arabidopsis thaliana (Mouse-ear cress).